Here is a 508-residue protein sequence, read N- to C-terminus: Photosystem II CP47 reaction center protein (508 aa).

A run of 6 helical transmembrane segments spans residues 21–36 (SVHI…WAGS), 101–115 (IVFS…IWHW), 140–156 (GIHL…FGAF), 203–218 (IAAG…FHLS), 237–252 (VLSS…AFVV), and 457–472 (TFAL…HGAR).

This sequence belongs to the PsbB/PsbC family. PsbB subfamily. PSII is composed of 1 copy each of membrane proteins PsbA, PsbB, PsbC, PsbD, PsbE, PsbF, PsbH, PsbI, PsbJ, PsbK, PsbL, PsbM, PsbT, PsbX, PsbY, PsbZ, Psb30/Ycf12, at least 3 peripheral proteins of the oxygen-evolving complex and a large number of cofactors. It forms dimeric complexes. The cofactor is Binds multiple chlorophylls. PSII binds additional chlorophylls, carotenoids and specific lipids..

The protein resides in the plastid. It localises to the chloroplast thylakoid membrane. Functionally, one of the components of the core complex of photosystem II (PSII). It binds chlorophyll and helps catalyze the primary light-induced photochemical processes of PSII. PSII is a light-driven water:plastoquinone oxidoreductase, using light energy to abstract electrons from H(2)O, generating O(2) and a proton gradient subsequently used for ATP formation. The polypeptide is Photosystem II CP47 reaction center protein (Calycanthus floridus var. glaucus (Eastern sweetshrub)).